The primary structure comprises 69 residues: Large ribosomal subunit protein uL29 (69 aa).

Belongs to the universal ribosomal protein uL29 family.

This Polaromonas sp. (strain JS666 / ATCC BAA-500) protein is Large ribosomal subunit protein uL29.